Reading from the N-terminus, the 459-residue chain is Kelch-like protein terF (459 aa).

Kelch repeat units follow at residues 92–144 (STVV…LVGD), 145–196 (EIFV…VVDG), 198–248 (IYYL…TVVV), 251–304 (TIYL…IYRD), 306–354 (LYIL…TIGS), and 355–405 (LIFT…VYKG).

The protein operates within secondary metabolite biosynthesis. Kelch-like protein; part of the gene cluster that mediates the biosynthesis of terrein, a fungal metabolite with ecological, antimicrobial, antiproliferative, and antioxidative activities. The first step in the pathway is performed by the polyketide synthase terA that produces 4-hydroxy-6-methylpyranon (4-HMP), orsellinic acid (OA), and 2,3-dehydro-6-hydroxymellein (2,3-dehydro-6-HM) by condensing acetyl-CoA with two, three, or four malonyl-CoA units, respectively. 4-HMP and OA are not pathway intermediates, but are rather shunt or side products. 2,3-dehydro-6-HM is further converted to 6-hydroxymellein (6-HM) by the 6-hydroxymellein synthase terB. The monooxygenases terC and terD, the multicopper oxidase terE and the Kelch-like protein terF are then involved in the transformation of 6-HM to terrein. Even if they are co-regulated with the other terrein cluster genes, terH and terI seem to be dispensable for terrein production; whereas one or both of the 2 transporters terG and terJ are probably required for efficient secretion of metabolites. This chain is Kelch-like protein terF, found in Aspergillus terreus (strain NIH 2624 / FGSC A1156).